Here is a 143-residue protein sequence, read N- to C-terminus: Large ribosomal subunit protein uL11 (143 aa).

Belongs to the universal ribosomal protein uL11 family. Part of the ribosomal stalk of the 50S ribosomal subunit. Interacts with L10 and the large rRNA to form the base of the stalk. L10 forms an elongated spine to which L12 dimers bind in a sequential fashion forming a multimeric L10(L12)X complex. In terms of processing, one or more lysine residues are methylated.

Functionally, forms part of the ribosomal stalk which helps the ribosome interact with GTP-bound translation factors. The sequence is that of Large ribosomal subunit protein uL11 from Pseudomonas putida (strain ATCC 700007 / DSM 6899 / JCM 31910 / BCRC 17059 / LMG 24140 / F1).